We begin with the raw amino-acid sequence, 302 residues long: Porphobilinogen deaminase (302 aa).

Cys234 is subject to S-(dipyrrolylmethanemethyl)cysteine.

It belongs to the HMBS family. In terms of assembly, monomer. Dipyrromethane is required as a cofactor.

It catalyses the reaction 4 porphobilinogen + H2O = hydroxymethylbilane + 4 NH4(+). It functions in the pathway porphyrin-containing compound metabolism; protoporphyrin-IX biosynthesis; coproporphyrinogen-III from 5-aminolevulinate: step 2/4. In terms of biological role, tetrapolymerization of the monopyrrole PBG into the hydroxymethylbilane pre-uroporphyrinogen in several discrete steps. The polypeptide is Porphobilinogen deaminase (Corynebacterium glutamicum (strain R)).